Consider the following 311-residue polypeptide: Probable manganese-dependent inorganic pyrophosphatase (311 aa).

The Mn(2+) site is built by histidine 9, aspartate 13, aspartate 15, aspartate 75, histidine 97, and aspartate 149.

It belongs to the PPase class C family. Mn(2+) serves as cofactor.

It is found in the cytoplasm. The catalysed reaction is diphosphate + H2O = 2 phosphate + H(+). This Shouchella clausii (strain KSM-K16) (Alkalihalobacillus clausii) protein is Probable manganese-dependent inorganic pyrophosphatase.